The primary structure comprises 361 residues: Protein-L-isoaspartate O-methyltransferase domain-containing protein 2 (361 aa).

Residue Gly-2 is the site of N-myristoyl glycine attachment. Residue Ser-64 is part of the active site. AdoMet binding motif regions lie at residues 85–94 (LNLGSGTGYL), 160–164 (YDRVY), and 181–191 (LKVGGILVMPL). The interval 240 to 250 (VRSLQDLARIA) is BC-box. The disordered stretch occupies residues 303–336 (SNPSDDNSCEDLEEERREEEEKTPPETKPDPPVN). A compositionally biased stretch (acidic residues) spans 309-320 (NSCEDLEEERRE). Over residues 321-331 (EEEKTPPETKP) the composition is skewed to basic and acidic residues. The segment at 345–348 (LPLP) is CUL-box.

This sequence belongs to the methyltransferase superfamily. L-isoaspartyl/D-aspartyl protein methyltransferase family.

It is found in the cytoplasm. Its function is as follows. May act as a substrate recognition component of an ECS (Elongin BC-CUL5-SOCS-box protein) E3 ubiquitin ligase complex which mediates the ubiquitination and subsequent proteasomal degradation of target proteins. May bind to the methyltransferase cofactor S-adenosylmethionine (AdoMet) via the N-terminal AdoMet binding motif, but probably does not display methyltransferase activity. In Homo sapiens (Human), this protein is Protein-L-isoaspartate O-methyltransferase domain-containing protein 2 (PCMTD2).